The primary structure comprises 411 residues: Methylthioribose-1-phosphate isomerase (411 aa).

Ser-2 carries the post-translational modification N-acetylserine. Asp-280 acts as the Proton donor in catalysis. Ser-351 is modified (phosphoserine).

This sequence belongs to the eIF-2B alpha/beta/delta subunits family. MtnA subfamily. As to quaternary structure, homodimer.

Its subcellular location is the cytoplasm. It localises to the nucleus. The catalysed reaction is 5-(methylsulfanyl)-alpha-D-ribose 1-phosphate = 5-(methylsulfanyl)-D-ribulose 1-phosphate. It functions in the pathway amino-acid biosynthesis; L-methionine biosynthesis via salvage pathway; L-methionine from S-methyl-5-thio-alpha-D-ribose 1-phosphate: step 1/6. Functionally, catalyzes the interconversion of methylthioribose-1-phosphate (MTR-1-P) into methylthioribulose-1-phosphate (MTRu-1-P). This is Methylthioribose-1-phosphate isomerase from Saccharomyces cerevisiae (strain JAY291) (Baker's yeast).